The following is a 146-amino-acid chain: Small ribosomal subunit protein uS5 (146 aa).

The S5 DRBM domain occupies 8–71 (FSEVVVNIGR…DDAFKNIIKV (64 aa)).

The protein belongs to the universal ribosomal protein uS5 family. In terms of assembly, part of the 30S ribosomal subunit. Contacts proteins S4 and S8.

In terms of biological role, with S4 and S12 plays an important role in translational accuracy. Functionally, located at the back of the 30S subunit body where it stabilizes the conformation of the head with respect to the body. This Helicobacter hepaticus (strain ATCC 51449 / 3B1) protein is Small ribosomal subunit protein uS5.